Consider the following 48-residue polypeptide: Sperm protamine P1 (48 aa).

It belongs to the protamine P1 family. In terms of tissue distribution, testis.

It is found in the nucleus. Its subcellular location is the chromosome. Functionally, protamines substitute for histones in the chromatin of sperm during the haploid phase of spermatogenesis. They compact sperm DNA into a highly condensed, stable and inactive complex. The polypeptide is Sperm protamine P1 (PRM1) (Monophyllus redmani (Greater Antillean long-tongued bat)).